We begin with the raw amino-acid sequence, 369 residues long: Delta(6)-protoilludene synthase STEHIDRAFT_73029 (369 aa).

4 residues coordinate Mg(2+): D107, N243, S247, and E251. Positions 107–111 match the D(D/E)XX(D/E) motif motif; the sequence is DEYSD. Residues 243 to 251 carry the NSE motif motif; that stretch reads NDIVSYNLE. R333 and Y334 together coordinate (2E,6E)-farnesyl diphosphate.

This sequence belongs to the terpene synthase family. Mg(2+) is required as a cofactor. Mn(2+) serves as cofactor. Requires Ca(2+) as cofactor. The cofactor is Ni(2+). It depends on Co(2+) as a cofactor.

It carries out the reaction (2E,6E)-farnesyl diphosphate = Delta(6)-protoilludene + diphosphate. It catalyses the reaction (2E,6E)-farnesyl diphosphate = alpha-selinene + diphosphate. Its activity is regulated as follows. Ca(2+) switches the cyclization mechanism of delta(6)-protoilludene synthase from 1,11 to 1,10 cyclization which leads to the production of beta-elemene. Its function is as follows. Terpene cyclase that catalyzes the cyclization of farnesyl diphosphate (FPP) to delta(6)-protoilludene. In presence of Ca(2+), a significant switch from 1,11 to a dual 1,11/1,10 cyclization occurs, producing beta-elemene as the major product, with lower levels of delta(6)-protoilludene and (E)-beta-caryophyllene, and traces of beta-selinene and alpha-selinene. The chain is Delta(6)-protoilludene synthase STEHIDRAFT_73029 from Stereum hirsutum (strain FP-91666) (White-rot fungus).